The chain runs to 507 residues: Maturase K (507 aa).

It belongs to the intron maturase 2 family. MatK subfamily.

Its subcellular location is the plastid. The protein localises to the chloroplast. Its function is as follows. Usually encoded in the trnK tRNA gene intron. Probably assists in splicing its own and other chloroplast group II introns. The sequence is that of Maturase K from Browningia hertlingiana (Cactus).